The primary structure comprises 461 residues: Argininosuccinate lyase (461 aa).

It belongs to the lyase 1 family. Argininosuccinate lyase subfamily.

Its subcellular location is the cytoplasm. It carries out the reaction 2-(N(omega)-L-arginino)succinate = fumarate + L-arginine. It participates in amino-acid biosynthesis; L-arginine biosynthesis; L-arginine from L-ornithine and carbamoyl phosphate: step 3/3. This chain is Argininosuccinate lyase, found in Trichormus variabilis (strain ATCC 29413 / PCC 7937) (Anabaena variabilis).